We begin with the raw amino-acid sequence, 322 residues long: F-actin-capping protein subunit beta (322 aa).

Belongs to the F-actin-capping protein beta subunit family. As to quaternary structure, component of the F-actin capping complex, composed of a heterodimer of an alpha and a beta subunit.

It is found in the cytoplasm. The protein resides in the cytoskeleton. It localises to the actin patch. Its function is as follows. F-actin-capping proteins bind in a Ca(2+)-independent manner to the fast growing ends of actin filaments (barbed end) thereby blocking the exchange of subunits at these ends. Unlike other capping proteins (such as gelsolin and severin), these proteins do not sever actin filaments. This Aspergillus fumigatus (strain ATCC MYA-4609 / CBS 101355 / FGSC A1100 / Af293) (Neosartorya fumigata) protein is F-actin-capping protein subunit beta (cap2).